The primary structure comprises 351 residues: MAGRSLTSKAEPTAGAVDRAEKAGGQDTSSQKIEDLMEMVQKLQKVGSLEPRVEVLINRINEVQQAKKKANKDLGEARTICEALQKELDSLHGEKVHLKEILSKKQETLRILRLHCQEKESEAHRKHTMLQECKERISALNLQIEEEKNKQRQLRLAFEEQLEDLMGQHKDLWDFHMPERLAKEICALDSSKEQLLKEEKLVKATLEDVKHQLCSLCGAEGPSTLDEGLFLRSQEAAATVQLFQEEHRKAEELLAAAAQRHQQLQQKCQQQQQKRQRLKEELEKHGMQVPAQAQSTQEEEAGPGDVASPKPLKGERPGAAHQAGPDVLIGQEDTLHPDLSPRGFQEIKELF.

A compositionally biased stretch (polar residues) spans 1–10 (MAGRSLTSKA). Disordered regions lie at residues 1-31 (MAGRSLTSKAEPTAGAVDRAEKAGGQDTSSQ) and 267-351 (KCQQ…KELF). A coiled-coil region spans residues 52 to 290 (RVEVLINRIN…ELEKHGMQVP (239 aa)).

It belongs to the SYCE family. As to quaternary structure, homodimer. Found in a complex with SYCP1 and SYCE2. Interacts with SYCP1, SYCE2 and SYCE3. Interacts with SIX6OS1.

It is found in the nucleus. Its subcellular location is the chromosome. Major component of the transverse central element of synaptonemal complexes (SCS), formed between homologous chromosomes during meiotic prophase. Requires SYCP1 in order to be incorporated into the central element. May have a role in the synaptonemal complex assembly, stabilization and recombination. The polypeptide is Synaptonemal complex central element protein 1 (SYCE1) (Homo sapiens (Human)).